The chain runs to 270 residues: UPF0354 protein BCAH187_A4826 (270 aa).

This sequence belongs to the UPF0354 family.

This is UPF0354 protein BCAH187_A4826 from Bacillus cereus (strain AH187).